Here is a 568-residue protein sequence, read N- to C-terminus: DNA mismatch repair protein MutL (568 aa).

It belongs to the DNA mismatch repair MutL/HexB family.

Its function is as follows. This protein is involved in the repair of mismatches in DNA. It is required for dam-dependent methyl-directed DNA mismatch repair. May act as a 'molecular matchmaker', a protein that promotes the formation of a stable complex between two or more DNA-binding proteins in an ATP-dependent manner without itself being part of a final effector complex. This chain is DNA mismatch repair protein MutL, found in Nostoc punctiforme (strain ATCC 29133 / PCC 73102).